A 273-amino-acid polypeptide reads, in one-letter code: Transcriptional regulator ICP22 homolog (273 aa).

2 disordered regions span residues 1–57 (GSCR…YGLP) and 160–273 (YEQR…SARR). The span at 11-33 (PSTSPIIPSLSPSSGGNPSPRSS) shows a compositional bias: low complexity. 2 stretches are compositionally biased toward acidic residues: residues 178-194 (EECE…EEEA) and 204-224 (SPEE…EDDS). The span at 261–273 (VPKGGRPAKSARR) shows a compositional bias: low complexity.

Belongs to the herpesviridae ICP22 family.

The polypeptide is Transcriptional regulator ICP22 homolog (Equus caballus (Horse)).